Reading from the N-terminus, the 258-residue chain is Terpene cyclase macJ (258 aa).

The next 7 helical transmembrane spans lie at 29 to 49 (VPDG…ILMA), 58 to 78 (YAMP…YGFV), 83 to 103 (LLNQ…FYAI), 124 to 144 (IIVV…ATFI), 151 to 171 (VVFM…IAQL), 181 to 201 (SWGI…CFFW), and 220 to 240 (FLLL…VYVQ).

The protein belongs to the paxB family.

It is found in the membrane. It functions in the pathway secondary metabolite biosynthesis; terpenoid biosynthesis. Functionally, terpene cyclase; part of the gene cluster that mediates the biosynthesis of macrophorins, isoprenoid epoxycyclohexenones containing cyclized drimane moieties. The first step of the pathway is the synthesis of 6-methylsalicylic acid (6-MSA) by the polyketide synthase macA. 6-MSA is then converted to m-cresol by the decarboxylase macB. The cytochrome P450 monooxygenase macC then catalyzes the oxidation of m-cresol to toluquinol. Epoxidation of toluquinol is then performed by the short chain dehydrogenase macD, with the help of macE, and a further prenylation by macG leads to 7-deacetoxyyanuthone A. The next step is the hydroxylation of C-22 of 7-deacetoxyyanuthone A by the cytochrome P450 monooxygenase macH to yield 22-deacetylyanuthone A. O-Mevalon transferase macI then attaches mevalon to the hydroxyl group of 22-deacetylyanuthone A to produce yanuthone E. The terpene cyclase macJ catalyzes the cyclization of 22-deacetylyanuthone A to macrophorin A. MacJ is also able to catalyze cyclization of yanuthone E and 7-deacetoxyyanuthone A to their corresponding macrophorins. The macJ products can be further modified by macH and macJ, as well as by the FAD-dependent monooxygenase macF, to produce additional macrophorins, including 4'-oxomacrophorin A, 4'-oxomacrophorin D and 4'-oxomacrophorin E. The protein is Terpene cyclase macJ of Penicillium terrestre.